Consider the following 262-residue polypeptide: MMEFILSHVEKGVMTLTLNRPERLNSFNDEMHAQLAECLKQVERDDTIRCLLLTGAGRGFCAGQDLNDRNVDPTGPAPDLGMSVERFYNPLVRRLAKLPKPVICAVNGVAAGAGATLALGGDIVIAARSAKFVMAFSKLGLIPDCGGTWLLPRVAGRARAMGLALLGNQLSAEQAHEWGMIWQVVDDETLADTAQQLARHLATQPTFGLGLIKQAINSAETNTLDTQLDLERDYQRLAGRSADYREGVSAFLAKRSPQFTGK.

Belongs to the enoyl-CoA hydratase/isomerase family.

The enzyme catalyses 2-(1,2-epoxy-1,2-dihydrophenyl)acetyl-CoA = 2-oxepin-2(3H)-ylideneacetyl-CoA. It functions in the pathway aromatic compound metabolism; phenylacetate degradation. In terms of biological role, catalyzes the reversible conversion of the epoxide to 2-oxepin-2(3H)-ylideneacetyl-CoA (oxepin-CoA). The protein is 1,2-epoxyphenylacetyl-CoA isomerase (paaG) of Escherichia coli (strain K12).